A 635-amino-acid chain; its full sequence is Early transcription factor 70 kDa subunit (635 aa).

The region spanning 32-185 (RSIIDENKSV…SNIISLMSDE (154 aa)) is the Helicase ATP-binding domain. Position 45–52 (45–52 (HIMGSGKT)) interacts with ATP. The short motif at 135 to 138 (DEAH) is the DEXH box element. The region spanning 326–505 (KFKYFIGKIT…TLPFDIKKLL (180 aa)) is the Helicase C-terminal domain.

This sequence belongs to the helicase family. VETF subfamily. As to quaternary structure, heterodimer of a 70 kDa and a 82 kDa subunit.

It localises to the virion. In terms of biological role, acts with RNA polymerase to initiate transcription from early gene promoters. A DNA-dependent ATPase activity is associated with VETF. This is Early transcription factor 70 kDa subunit (VETFS) from Erythrocebus patas (Red guenon).